The sequence spans 241 residues: MTLQWAAVATFLYAEIGLILIFCLPFIPPQRWQKIFSFNVWGKIATFWNKAFLTIIILLIVLFLDAVREVRKYSSVHTIEKSSTSRPDAYEHTQMKLFRSQRNLYISGFSLFFWLVLRRLVTLITQLAKELSNKGVLKTQAENTNKAAKKFMEENEKLKRILKSHGKDEECVLEAENKKLVEDQQKLKTELRKTSDALSKAQNDVMEMKMQSERLSKEYDQLLKEHSELQDRLERGNKKRL.

Residues 1-6 (MTLQWA) lie on the Lumenal side of the membrane. A helical membrane pass occupies residues 7–27 (AVATFLYAEIGLILIFCLPFI). Topologically, residues 28-43 (PPQRWQKIFSFNVWGK) are cytoplasmic. Residues 44–64 (IATFWNKAFLTIIILLIVLFL) traverse the membrane as a helical segment. Topologically, residues 65-103 (DAVREVRKYSSVHTIEKSSTSRPDAYEHTQMKLFRSQRN) are lumenal. A helical transmembrane segment spans residues 104–124 (LYISGFSLFFWLVLRRLVTLI). Residues 125-241 (TQLAKELSNK…RLERGNKKRL (117 aa)) lie on the Cytoplasmic side of the membrane. Residues 166-233 (GKDEECVLEA…KEHSELQDRL (68 aa)) are a coiled coil. The segment at 193–223 (KTSDALSKAQNDVMEMKMQSERLSKEYDQLL) is disordered. Over residues 206 to 223 (MEMKMQSERLSKEYDQLL) the composition is skewed to basic and acidic residues. Positions 238–241 (KKRL) match the Di-lysine motif motif.

The protein belongs to the BCAP29/BCAP31 family. As to quaternary structure, homodimer and heterodimer with BCAP31. Binds CASP8 as a complex containing BCAP31, BCAP29, BCL2 and/or BCL2L1. Interacts with VAMP3, VAMP1 and membrane IgD immunoglobulins. May interact with ACTG1 and non-muscle myosin II.

It localises to the endoplasmic reticulum membrane. Its function is as follows. May play a role in anterograde transport of membrane proteins from the endoplasmic reticulum to the Golgi. May be involved in CASP8-mediated apoptosis. The sequence is that of B-cell receptor-associated protein 29 (BCAP29) from Pongo abelii (Sumatran orangutan).